A 181-amino-acid chain; its full sequence is Ribosome maturation factor RimM (181 aa).

The 80-residue stretch at 98–177 folds into the PRC barrel domain; that stretch reads EGEFFYCDLV…KITTHNAKTL (80 aa).

This sequence belongs to the RimM family. In terms of assembly, binds ribosomal protein uS19.

The protein resides in the cytoplasm. An accessory protein needed during the final step in the assembly of 30S ribosomal subunit, possibly for assembly of the head region. Essential for efficient processing of 16S rRNA. May be needed both before and after RbfA during the maturation of 16S rRNA. It has affinity for free ribosomal 30S subunits but not for 70S ribosomes. This chain is Ribosome maturation factor RimM, found in Helicobacter pylori (strain HPAG1).